The primary structure comprises 514 residues: 1-pyrroline-5-carboxylate dehydrogenase (514 aa).

Residues E286 and C320 contribute to the active site.

The protein belongs to the aldehyde dehydrogenase family. RocA subfamily.

It carries out the reaction L-glutamate 5-semialdehyde + NAD(+) + H2O = L-glutamate + NADH + 2 H(+). It functions in the pathway amino-acid degradation; L-proline degradation into L-glutamate; L-glutamate from L-proline: step 2/2. This Staphylococcus aureus (strain MSSA476) protein is 1-pyrroline-5-carboxylate dehydrogenase.